We begin with the raw amino-acid sequence, 467 residues long: 2-succinylbenzoate--CoA ligase (467 aa).

This sequence belongs to the ATP-dependent AMP-binding enzyme family. MenE subfamily.

It catalyses the reaction 2-succinylbenzoate + ATP + CoA = 2-succinylbenzoyl-CoA + AMP + diphosphate. It functions in the pathway quinol/quinone metabolism; 1,4-dihydroxy-2-naphthoate biosynthesis; 1,4-dihydroxy-2-naphthoate from chorismate: step 5/7. Its pathway is quinol/quinone metabolism; menaquinone biosynthesis. Its function is as follows. Converts 2-succinylbenzoate (OSB) to 2-succinylbenzoyl-CoA (OSB-CoA). The sequence is that of 2-succinylbenzoate--CoA ligase from Listeria monocytogenes serotype 4b (strain F2365).